The sequence spans 20 residues: Cytolysin tenebrosin-A (20 aa).

Residues Ala-3–Ala-12 form a plays an important role in the hemolytic activity region. The tract at residues Gly-11–Gln-20 is N-terminal region.

This sequence belongs to the actinoporin family. Sea anemone subfamily. In terms of assembly, octamer or nonamer in membranes. Monomer in the soluble state.

It is found in the secreted. The protein localises to the nematocyst. It localises to the target cell membrane. Its function is as follows. Pore-forming protein that forms cations-selective hydrophilic pores of around 1 nm and causes cardiac stimulation and cytolysis. Pore formation is a multi-step process that involves specific recognition of membrane sphingomyelin (but neither cholesterol nor phosphatidylcholine) using aromatic rich region and adjacent phosphocholine (POC) binding site, firm binding to the membrane (mainly driven by hydrophobic interactions) accompanied by the transfer of the N-terminal region to the lipid-water interface and finally pore formation after oligomerization of monomers. The sequence is that of Cytolysin tenebrosin-A from Actinia tenebrosa (Australian red waratah sea anemone).